A 452-amino-acid chain; its full sequence is UDP-glycosyltransferase 76D1 (452 aa).

Residues serine 269, 329 to 331 (APQ), 346 to 354 (HGGWNSCLE), and 368 to 371 (SGDQ) contribute to the UDP-alpha-D-glucose site.

The protein belongs to the UDP-glycosyltransferase family.

Functionally, possesses low quercetin 7-O-glucosyltransferase activity in vitro. The protein is UDP-glycosyltransferase 76D1 (UGT76D1) of Arabidopsis thaliana (Mouse-ear cress).